Here is a 667-residue protein sequence, read N- to C-terminus: DNA ligase (667 aa).

Residues 34-38 (DAEYD), 83-84 (SL), and Glu-113 each bind NAD(+). Residue Lys-115 is the N6-AMP-lysine intermediate of the active site. 4 residues coordinate NAD(+): Arg-136, Glu-170, Lys-286, and Lys-310. Zn(2+)-binding residues include Cys-404, Cys-407, Cys-422, and Cys-427. A BRCT domain is found at 589 to 667 (ATDSVLSGKT…EQQLEDVVGK (79 aa)).

It belongs to the NAD-dependent DNA ligase family. LigA subfamily. Requires Mg(2+) as cofactor. It depends on Mn(2+) as a cofactor.

The catalysed reaction is NAD(+) + (deoxyribonucleotide)n-3'-hydroxyl + 5'-phospho-(deoxyribonucleotide)m = (deoxyribonucleotide)n+m + AMP + beta-nicotinamide D-nucleotide.. In terms of biological role, DNA ligase that catalyzes the formation of phosphodiester linkages between 5'-phosphoryl and 3'-hydroxyl groups in double-stranded DNA using NAD as a coenzyme and as the energy source for the reaction. It is essential for DNA replication and repair of damaged DNA. This chain is DNA ligase, found in Oceanobacillus iheyensis (strain DSM 14371 / CIP 107618 / JCM 11309 / KCTC 3954 / HTE831).